The sequence spans 394 residues: Elongation factor Tu 1 (394 aa).

The 195-residue stretch at 10–204 (KPHVNVGTIG…FLDSYIPEPE (195 aa)) folds into the tr-type G domain. The tract at residues 19–26 (GHVDHGKT) is G1. 19 to 26 (GHVDHGKT) provides a ligand contact to GTP. Threonine 26 is a Mg(2+) binding site. Residues 60-64 (GITIN) form a G2 region. A G3 region spans residues 81 to 84 (DCPG). Residues 81-85 (DCPGH) and 136-139 (NKCD) each bind GTP. The G4 stretch occupies residues 136–139 (NKCD). The segment at 174–176 (SAL) is G5.

This sequence belongs to the TRAFAC class translation factor GTPase superfamily. Classic translation factor GTPase family. EF-Tu/EF-1A subfamily. As to quaternary structure, monomer.

Its subcellular location is the cytoplasm. The enzyme catalyses GTP + H2O = GDP + phosphate + H(+). GTP hydrolase that promotes the GTP-dependent binding of aminoacyl-tRNA to the A-site of ribosomes during protein biosynthesis. The chain is Elongation factor Tu 1 from Shigella sonnei (strain Ss046).